The sequence spans 507 residues: Probable D-lactate dehydrogenase, mitochondrial (507 aa).

Residues 1–52 (MARLLRSATWELFPWRGYCSQKAKGELCRDFVEALKAVVGGSHVSTAAVVRE) constitute a mitochondrion transit peptide. Position 36 is an N6-acetyllysine (Lys-36). Positions 62 to 265 (RCEPPDAVVW…TATTLRLHPA (204 aa)) constitute an FAD-binding PCMH-type domain. Lys-315 is modified (N6-acetyllysine). Lys-358 is modified (N6-acetyllysine; alternate). N6-succinyllysine; alternate is present on Lys-358. Residues Lys-445 and Lys-472 each carry the N6-acetyllysine modification.

The protein belongs to the FAD-binding oxidoreductase/transferase type 4 family. In terms of assembly, interacts with CSRP3. The cofactor is FAD. Expressed moderately in heart and liver and at lower levels in skeletal muscle and kidney.

The protein resides in the mitochondrion. The enzyme catalyses (R)-lactate + 2 Fe(III)-[cytochrome c] = 2 Fe(II)-[cytochrome c] + pyruvate + 2 H(+). Functionally, involved in D-lactate, but not L-lactate catabolic process. The sequence is that of Probable D-lactate dehydrogenase, mitochondrial from Homo sapiens (Human).